The chain runs to 448 residues: Tubulin beta-1 chain (448 aa).

Positions 11, 69, 138, 142, 143, 144, 204, and 226 each coordinate GTP. Mg(2+) is bound at residue Glu-69. The interval 427 to 448 is disordered; the sequence is DATADEEGDLQEGESEYIEQEE. Acidic residues predominate over residues 429–448; that stretch reads TADEEGDLQEGESEYIEQEE.

Belongs to the tubulin family. As to quaternary structure, dimer of alpha and beta chains. A typical microtubule is a hollow water-filled tube with an outer diameter of 25 nm and an inner diameter of 15 nM. Alpha-beta heterodimers associate head-to-tail to form protofilaments running lengthwise along the microtubule wall with the beta-tubulin subunit facing the microtubule plus end conferring a structural polarity. Microtubules usually have 13 protofilaments but different protofilament numbers can be found in some organisms and specialized cells. Mg(2+) serves as cofactor.

Its subcellular location is the cytoplasm. It is found in the cytoskeleton. Its function is as follows. Tubulin is the major constituent of microtubules, a cylinder consisting of laterally associated linear protofilaments composed of alpha- and beta-tubulin heterodimers. Microtubules grow by the addition of GTP-tubulin dimers to the microtubule end, where a stabilizing cap forms. Below the cap, tubulin dimers are in GDP-bound state, owing to GTPase activity of alpha-tubulin. This Brugia pahangi (Filarial nematode worm) protein is Tubulin beta-1 chain.